A 502-amino-acid chain; its full sequence is Lysine--tRNA ligase (502 aa).

Positions 413 and 420 each coordinate Mg(2+).

The protein belongs to the class-II aminoacyl-tRNA synthetase family. As to quaternary structure, homodimer. Mg(2+) is required as a cofactor.

It localises to the cytoplasm. The enzyme catalyses tRNA(Lys) + L-lysine + ATP = L-lysyl-tRNA(Lys) + AMP + diphosphate. In Haemophilus influenzae (strain 86-028NP), this protein is Lysine--tRNA ligase.